The chain runs to 673 residues: Armadillo repeat-containing protein 8 (673 aa).

At A2 the chain carries N-acetylalanine. ARM repeat units lie at residues 51 to 92 (NKQK…SLAM), 95 to 134 (ENNV…TIFT), 138 to 176 (TPEE…HCCK), 178 to 217 (PDHQ…VLAF), 224 to 265 (MTLV…YMCR), 269 to 309 (IRTD…YLIE), 313 to 352 (ELQR…HDLK), 374 to 413 (DIRK…SLSR), 416 to 455 (QQLR…NLLL), 458 to 497 (SPSK…NTAF), 501 to 540 (QKIK…NLLS), 543 to 585 (PHID…NIAD), 588 to 627 (TAKD…NLIW), and 634 to 673 (QERQ…QYLA). The residue at position 337 (S337) is a Phosphoserine. At S512 the chain carries Phosphoserine.

As to quaternary structure, identified in the CTLH complex that contains GID4, RANBP9 and/or RANBP10, MKLN1, MAEA, RMND5A (or alternatively its paralog RMND5B), GID8, ARMC8, WDR26 and YPEL5. Within this complex, MAEA, RMND5A (or alternatively its paralog RMND5B), GID8, WDR26, and RANBP9 and/or RANBP10 form the catalytic core, while GID4, MKLN1, ARMC8 and YPEL5 have ancillary roles.

It is found in the nucleus. The protein localises to the cytoplasm. Its function is as follows. Component of the CTLH E3 ubiquitin-protein ligase complex that selectively accepts ubiquitin from UBE2H and mediates ubiquitination and subsequent proteasomal degradation of the transcription factor HBP1. This chain is Armadillo repeat-containing protein 8 (ARMC8), found in Pongo abelii (Sumatran orangutan).